A 228-amino-acid chain; its full sequence is Translin (228 aa).

The tract at residues 86–90 (RFHEH) is DNA/RNA binding. Positions 177–198 (LDSGFRLLNLKNDSLRKRYDGL) are leucine-zipper. K187 carries the N6-acetyllysine modification. At S190 the chain carries Phosphoserine. Residue K199 is modified to N6-acetyllysine.

Belongs to the translin family. Ring-shaped heterooctamer of six TSN and two TSNAX subunits, DNA/RNA binding occurs inside the ring.

Its subcellular location is the cytoplasm. It is found in the nucleus. Its function is as follows. DNA-binding protein that specifically recognizes consensus sequences at the breakpoint junctions in chromosomal translocations, mostly involving immunoglobulin (Ig)/T-cell receptor gene segments. Seems to recognize single-stranded DNA ends generated by staggered breaks occurring at recombination hot spots. Exhibits both single-stranded and double-stranded endoribonuclease activity. May act as an activator of RNA-induced silencing complex (RISC) by facilitating endonucleolytic cleavage of the siRNA passenger strand. This chain is Translin (Tsn), found in Mus musculus (Mouse).